The sequence spans 2233 residues: Acetyl-CoA carboxylase (2233 aa).

Residue Ser2 is modified to N-acetylserine. At Ser2 the chain carries Phosphoserine. The region spanning 58-567 is the Biotin carboxylation domain; it reads VISKILIANN…TTGWLDDLIT (510 aa). Residues 216–408 enclose the ATP-grasp domain; sequence KTGLVSVDDD…LPAAQLQIAM (193 aa). Position 256–261 (256–261) interacts with ATP; sequence GGGGKG. Mn(2+) contacts are provided by Glu365, Glu379, and Asn381. The active site involves Arg383. Residues 694–768 enclose the Biotinyl-binding domain; the sequence is LEVENDPTQL…VAGDIMAIMT (75 aa). Lys735 is modified (N6-biotinyllysine). Residues Ser790, Ser1148, Ser1157, and Ser1162 each carry the phosphoserine modification. Positions 1486 to 1822 constitute a CoA carboxyltransferase N-terminal domain; the sequence is PYPVKEWLQP…KRNMPVPILE (337 aa). Residues 1486–2141 form a carboxyltransferase region; it reads PYPVKEWLQP…EEYLIKRLSH (656 aa). 1627–1629 contacts acetyl-CoA; that stretch reads ARI. Arg1731 is a CoA binding site. The CoA carboxyltransferase C-terminal domain maps to 1826–2141; the sequence is TWDRPVDFTP…EEYLIKRLSH (316 aa). Gly1998 contributes to the acetyl-CoA binding site. Residues Lys2034 and Arg2036 each contribute to the CoA site.

Homodimer. The cofactor is biotin. It depends on Mn(2+) as a cofactor.

It is found in the cytoplasm. The protein resides in the endoplasmic reticulum membrane. It carries out the reaction hydrogencarbonate + acetyl-CoA + ATP = malonyl-CoA + ADP + phosphate + H(+). It catalyses the reaction N(6)-biotinyl-L-lysyl-[protein] + hydrogencarbonate + ATP = N(6)-carboxybiotinyl-L-lysyl-[protein] + ADP + phosphate + H(+). Its pathway is lipid metabolism; malonyl-CoA biosynthesis; malonyl-CoA from acetyl-CoA: step 1/1. With respect to regulation, by phosphorylation. The catalytic activity is inhibited by soraphen A, a polyketide isolated from the myxobacterium Sorangium cellulosum and a potent inhibitor of fungal growth. Its function is as follows. Carries out three functions: biotin carboxyl carrier protein, biotin carboxylase and carboxyltransferase. Involved in the synthesis of very-long-chain fatty acid synthesis which is required to maintain a functional nuclear envelope. Required for acylation and vacuolar membrane association of VAC8 which is necessary to maintain a normal morphology of the vacuole. The sequence is that of Acetyl-CoA carboxylase (ACC1) from Saccharomyces cerevisiae (strain ATCC 204508 / S288c) (Baker's yeast).